The sequence spans 315 residues: Beta-carotene hydroxylase 1, chloroplastic (315 aa).

The N-terminal 58 residues, 1–58, are a transit peptide targeting the chloroplast; the sequence is MAAEISISASSRAICLQRNPFPAPKYFATAPPLLFFSPLTCNLDAILRSRRKPRLAAC. Helical transmembrane passes span 112 to 132 and 146 to 166; these read YLVA…ISVY and FSEM…MEYW. One can recognise a Fatty acid hydroxylase domain in the interval 159 to 286; the sequence is AAIGMEYWAR…KFDGVPYGLF (128 aa). The Histidine box-1 motif lies at 171-176; that stretch reads HRALWH. The Histidine box-2 motif lies at 183 to 187; that stretch reads HESHH. 2 consecutive transmembrane segments (helical) span residues 196 to 216 and 222 to 242; these read LNDI…SFGF and IPGL…AYMF. A Histidine box-3 motif is present at residues 244-249; the sequence is HDGLVH. Residues 270–274 carry the Histidine box-4 motif; that stretch reads HQLHH.

It belongs to the sterol desaturase family.

It is found in the plastid. Its subcellular location is the chloroplast membrane. The catalysed reaction is all-trans-beta-carotene + 4 reduced [2Fe-2S]-[ferredoxin] + 2 O2 + 4 H(+) = all-trans-zeaxanthin + 4 oxidized [2Fe-2S]-[ferredoxin] + 2 H2O. It catalyses the reaction all-trans-beta-carotene + 2 reduced [2Fe-2S]-[ferredoxin] + O2 + 2 H(+) = beta-cryptoxanthin + 2 oxidized [2Fe-2S]-[ferredoxin] + H2O. It carries out the reaction beta-cryptoxanthin + 2 reduced [2Fe-2S]-[ferredoxin] + O2 + 2 H(+) = all-trans-zeaxanthin + 2 oxidized [2Fe-2S]-[ferredoxin] + H2O. Inhibited by o-phenanthroline and 8-hydroxyquinoline. Functionally, nonheme diiron monooxygenase involved in the biosynthesis of xanthophylls. Specific for beta-ring hydroxylations of beta-carotene. Produces beta-cryptoxanthin and zeaxanthin. Uses ferredoxin as an electron donor. This Capsicum annuum (Capsicum pepper) protein is Beta-carotene hydroxylase 1, chloroplastic.